Reading from the N-terminus, the 331-residue chain is uncharacterized protein (331 aa).

It belongs to the IIV-6 335L family.

This is an uncharacterized protein from Invertebrate iridescent virus 6 (IIV-6).